The sequence spans 193 residues: Ribonuclease HII (193 aa).

One can recognise an RNase H type-2 domain in the interval 15–193 (CIVAGIDEAG…PYHRRSFRCC (179 aa)). D21, E22, and D112 together coordinate a divalent metal cation.

The protein belongs to the RNase HII family. Requires Mn(2+) as cofactor. It depends on Mg(2+) as a cofactor.

It localises to the cytoplasm. It catalyses the reaction Endonucleolytic cleavage to 5'-phosphomonoester.. Functionally, endonuclease that specifically degrades the RNA of RNA-DNA hybrids. This is Ribonuclease HII from Rickettsia conorii (strain ATCC VR-613 / Malish 7).